The chain runs to 221 residues: Probable septum site-determining protein MinC (221 aa).

This sequence belongs to the MinC family. In terms of assembly, interacts with MinD and FtsZ.

Its function is as follows. Cell division inhibitor that blocks the formation of polar Z ring septums. Rapidly oscillates between the poles of the cell to destabilize FtsZ filaments that have formed before they mature into polar Z rings. Prevents FtsZ polymerization. This Shewanella woodyi (strain ATCC 51908 / MS32) protein is Probable septum site-determining protein MinC.